The chain runs to 354 residues: MAPSAQPLPVSVSDEKYANVKWEELAFKFVRTDYMYVAKCNHGESFQEGKILPFADLQLNPCAAVLQYGQGLYEGLKAYRTEDGRILLFRPDQNGLRLQAGADRLYMPYPSVDQFVSAIKQVALANKKWIPPPGKGTLYIRPILFGSGPILGSFPIPETTFTAFACPVGRYHKDNSGLNLKIEDQFRRAFPSGTGGVKSITNYCPVWIPLAEAKKQGFSDILFLDAATGKNIEELFAANVFMLKGNVVSTPTIAGTILPGVTRNCVMELCRDFGYQVEERTIPLVDFLDADEAFCTGTASIVTSIASVTFKDKKTGFKTGEETLAAKLYETLSDIQTGRVEDTKGWTVEIDRQG.

The residue at position 198 (Lys198) is an N6-(pyridoxal phosphate)lysine.

The protein belongs to the class-IV pyridoxal-phosphate-dependent aminotransferase family. Pyridoxal 5'-phosphate serves as cofactor. As to expression, mostly expressed in phloem.

The protein resides in the cytoplasm. The enzyme catalyses a 2-oxocarboxylate + L-methionine = 4-methylsulfanyl-2-oxobutanoate + an L-alpha-amino acid. In terms of biological role, converts 2-oxo acids to branched-chain amino acids. Shows activity with L-Leu, L-Ile and L-Val as amino donors and alpha-keto-glutarate as an amino acceptor, but no activity for D-isomers of Leu, Ile, Val, Asp, Glu or Ala. Acts on methionine and its derivatives and the corresponding 2-oxo acids. Catalyzes the initial deamination of methionine to 4-methylthio-2-oxobutyrate as well as the transamination of other typical intermediates of the methionine chain elongation pathway. The sequence is that of Methionine aminotransferase BCAT4 (BCAT4) from Arabidopsis thaliana (Mouse-ear cress).